The sequence spans 287 residues: F-actin-capping protein subunit beta (287 aa).

Serine 2 is modified (N-acetylserine). A phosphoserine mark is found at serine 85 and serine 92.

Belongs to the F-actin-capping protein beta subunit family. Component of the F-actin capping complex, composed of a heterodimer of an alpha and a beta subunit. Interacts with BSP1 (via C-terminus); leading to recruitment of the F-actin capping complex to actin cortical patches and the acomyosin contractile ring.

It is found in the cytoplasm. The protein resides in the cytoskeleton. It localises to the actin patch. Its subcellular location is the bud. The protein localises to the bud tip. F-actin-capping proteins bind in a Ca(2+)-independent manner to the fast growing ends of actin filaments (barbed end) thereby blocking the exchange of subunits at these ends. Unlike other capping proteins (such as gelsolin and severin), these proteins do not sever actin filaments. The sequence is that of F-actin-capping protein subunit beta (CAP2) from Saccharomyces cerevisiae (strain ATCC 204508 / S288c) (Baker's yeast).